The chain runs to 231 residues: Flagellar L-ring protein (231 aa).

Residues 1 to 18 (MKRFVSVVALSGVVSLAG) form the signal peptide. Cys-19 carries the N-palmitoyl cysteine lipid modification. A lipid anchor (S-diacylglycerol cysteine) is attached at Cys-19.

It belongs to the FlgH family. As to quaternary structure, the basal body constitutes a major portion of the flagellar organelle and consists of four rings (L,P,S, and M) mounted on a central rod.

The protein resides in the cell outer membrane. It is found in the bacterial flagellum basal body. Functionally, assembles around the rod to form the L-ring and probably protects the motor/basal body from shearing forces during rotation. This is Flagellar L-ring protein from Pseudomonas fluorescens (strain Pf0-1).